A 1044-amino-acid chain; its full sequence is Isoleucine--tRNA ligase (1044 aa).

The short motif at 49-59 (PYCSGRIHLGT) is the 'HIGH' region element. The short motif at 591 to 595 (KMSKS) is the 'KMSKS' region element. ATP is bound at residue Lys-594.

The protein belongs to the class-I aminoacyl-tRNA synthetase family. IleS type 2 subfamily. As to quaternary structure, monomer. Zn(2+) is required as a cofactor.

The protein localises to the cytoplasm. The catalysed reaction is tRNA(Ile) + L-isoleucine + ATP = L-isoleucyl-tRNA(Ile) + AMP + diphosphate. Its function is as follows. Catalyzes the attachment of isoleucine to tRNA(Ile). As IleRS can inadvertently accommodate and process structurally similar amino acids such as valine, to avoid such errors it has two additional distinct tRNA(Ile)-dependent editing activities. One activity is designated as 'pretransfer' editing and involves the hydrolysis of activated Val-AMP. The other activity is designated 'posttransfer' editing and involves deacylation of mischarged Val-tRNA(Ile). In Methanothermobacter thermautotrophicus (strain ATCC 29096 / DSM 1053 / JCM 10044 / NBRC 100330 / Delta H) (Methanobacterium thermoautotrophicum), this protein is Isoleucine--tRNA ligase.